Reading from the N-terminus, the 562-residue chain is Non-homologous end joining factor IFFO1 (562 aa).

The tract at residues 65 to 116 is LMNA binding; the sequence is ALRNDLGSNINVLKTLNLRFRCFLAKVHELERRNRLLEKQLQQALEEGKQGR. The region spanning 73 to 529 is the IF rod domain; sequence NINVLKTLNL…RLITQSGDRK (457 aa). Residues 85-117 adopt a coiled-coil conformation; the sequence is RCFLAKVHELERRNRLLEKQLQQALEEGKQGRR. Positions 154-187 are disordered; the sequence is RVLGSPSRSPAGPLASSAACHTSSSTSTSTAFSS. Over residues 168-187 the composition is skewed to low complexity; sequence ASSAACHTSSSTSTSTAFSS. Residues 237 to 301 adopt a coiled-coil conformation; sequence EIRALYNVLA…MKVEQLKAEL (65 aa). The interval 364–401 is disordered; that stretch reads MGGRKRERKAAVEEDTSLSESDGPRQPEGAEEESTALS. An XCCR4 binding. Required for localization to the double-strand breaks (DSBs) region spans residues 453-528; that stretch reads EQEDSLEKVI…RRLITQSGDR (76 aa). Residues 458–504 adopt a coiled-coil conformation; it reads LEKVIKDTESLFKTREKEYQETIDQIELELATAKNDMNRHLHEYMEM. Positions 523-562 are disordered; sequence TQSGDRKSPAFTAVPLSDPPPPPSETEDSDRDVSSDSSMR. The span at 553-562 shows a compositional bias: basic and acidic residues; sequence RDVSSDSSMR.

Belongs to the intermediate filament family. As to quaternary structure, forms a heterotetramer with XRCC4. The interaction with XRCC4 is direct, involves LIG4-free XRCC4 and leads to relocalization of IFFO1 at the double-strand break (DSB) sites. Interacts with LMNA; the interaction forms an interior nucleoskeleton and the recruitment to DNA double-strand breaks.

Its subcellular location is the nucleus. The protein resides in the nucleoplasm. It localises to the nucleus inner membrane. The protein localises to the nucleus matrix. Nuclear matrix protein involved in the immobilization of broken DNA ends and the suppression of chromosome translocation during DNA double-strand breaks (DSBs). Interacts with the nuclear lamina component LMNA, resulting in the formation of a nucleoskeleton that will relocalize to the DSB sites in a XRCC4-dependent manner and promote the immobilization of the broken ends, thereby preventing chromosome translocation. Acts as a scaffold that allows the DNA repair protein XRCC4 and LMNA to assemble into a complex at the DSB sites. This is Non-homologous end joining factor IFFO1 from Mus musculus (Mouse).